The sequence spans 336 residues: F420-dependent glucose-6-phosphate dehydrogenase (336 aa).

Asp39 contacts coenzyme F420-(gamma-Glu)n. His40 serves as the catalytic Proton donor. Coenzyme F420-(gamma-Glu)n contacts are provided by residues Thr76 and 107 to 108; that span reads SG. The active-site Proton acceptor is the Glu109. Coenzyme F420-(gamma-Glu)n contacts are provided by residues Asn112, 177-178, and 180-181; these read GG and VV. 4 residues coordinate substrate: Thr195, Lys198, Lys259, and Arg283.

This sequence belongs to the F420-dependent glucose-6-phosphate dehydrogenase family. In terms of assembly, homodimer.

The catalysed reaction is oxidized coenzyme F420-(gamma-L-Glu)(n) + D-glucose 6-phosphate + H(+) = 6-phospho-D-glucono-1,5-lactone + reduced coenzyme F420-(gamma-L-Glu)(n). Functionally, catalyzes the coenzyme F420-dependent oxidation of glucose 6-phosphate (G6P) to 6-phosphogluconolactone. This Tsukamurella paurometabola (strain ATCC 8368 / DSM 20162 / CCUG 35730 / CIP 100753 / JCM 10117 / KCTC 9821 / NBRC 16120 / NCIMB 702349 / NCTC 13040) (Corynebacterium paurometabolum) protein is F420-dependent glucose-6-phosphate dehydrogenase.